The chain runs to 374 residues: tRNA-specific 2-thiouridylase MnmA (374 aa).

ATP-binding positions include glycine 17–serine 24 and methionine 43. Residues asparagine 103–aspartate 105 form an interaction with target base in tRNA region. Cysteine 108 acts as the Nucleophile in catalysis. Cysteines 108 and 204 form a disulfide. Glycine 132 is a binding site for ATP. The interval lysine 154–glutamine 156 is interaction with tRNA. The active-site Cysteine persulfide intermediate is the cysteine 204. The interval arginine 316 to tyrosine 317 is interaction with tRNA.

The protein belongs to the MnmA/TRMU family.

Its subcellular location is the cytoplasm. The enzyme catalyses S-sulfanyl-L-cysteinyl-[protein] + uridine(34) in tRNA + AH2 + ATP = 2-thiouridine(34) in tRNA + L-cysteinyl-[protein] + A + AMP + diphosphate + H(+). Its function is as follows. Catalyzes the 2-thiolation of uridine at the wobble position (U34) of tRNA, leading to the formation of s(2)U34. In Pseudomonas putida (strain W619), this protein is tRNA-specific 2-thiouridylase MnmA.